The primary structure comprises 238 residues: Ephrin-A3 (238 aa).

The signal sequence occupies residues 1–22 (MAAAPLLLLLLLVPVPLLPLLA). The Ephrin RBD domain maps to 30–169 (GNRHAVYWNS…RMKVFVCCAS (140 aa)). N-linked (GlcNAc...) asparagine glycosylation is found at Asn38, Asn67, and Asn100. 2 cysteine pairs are disulfide-bonded: Cys63–Cys110 and Cys99–Cys158. Gly214 is lipidated: GPI-anchor amidated glycine. The propeptide at 215 to 238 (TSPKREHLPLAVGIAFFLMTFLAS) is removed in mature form.

It belongs to the ephrin family. As to quaternary structure, interacts with EPHA8; activates EPHA8. In terms of tissue distribution, expressed in brain, skeletal muscle, spleen, thymus, prostate, testis, ovary, small intestine, and peripheral blood leukocytes.

The protein localises to the cell membrane. Cell surface GPI-bound ligand for Eph receptors, a family of receptor tyrosine kinases which are crucial for migration, repulsion and adhesion during neuronal, vascular and epithelial development. Binds promiscuously Eph receptors residing on adjacent cells, leading to contact-dependent bidirectional signaling into neighboring cells. The signaling pathway downstream of the receptor is referred to as forward signaling while the signaling pathway downstream of the ephrin ligand is referred to as reverse signaling. The sequence is that of Ephrin-A3 (EFNA3) from Homo sapiens (Human).